The sequence spans 429 residues: Glucose-6-phosphate isomerase (429 aa).

The active-site Proton donor is the E282. Catalysis depends on residues H303 and K418.

This sequence belongs to the GPI family.

It is found in the cytoplasm. The enzyme catalyses alpha-D-glucose 6-phosphate = beta-D-fructose 6-phosphate. It functions in the pathway carbohydrate biosynthesis; gluconeogenesis. The protein operates within carbohydrate degradation; glycolysis; D-glyceraldehyde 3-phosphate and glycerone phosphate from D-glucose: step 2/4. Its function is as follows. Catalyzes the reversible isomerization of glucose-6-phosphate to fructose-6-phosphate. The polypeptide is Glucose-6-phosphate isomerase (Mesomycoplasma hyopneumoniae (strain J / ATCC 25934 / NCTC 10110) (Mycoplasma hyopneumoniae)).